The primary structure comprises 388 residues: CUE domain-containing protein 1 (388 aa).

The span at 1–10 (MTSLFRRSSS) shows a compositional bias: low complexity. Positions 1-45 (MTSLFRRSSSGSGGGGATGARGAGTGAGDGSTAPQELNNSRPARQ) are disordered. Residues 11-29 (GSGGGGATGARGAGTGAGD) are compositionally biased toward gly residues. One can recognise a CUE domain in the interval 50 to 93 (EFNQAMDDFKTMFPNMDYDIIECVLRANSGAVDATIDQLLQMNL). Disordered stretches follow at residues 152 to 178 (PTPP…WNPP), 196 to 225 (DSIQ…ACDQ), 270 to 302 (SQKS…TVSE), and 369 to 388 (DFRG…REGQ). The segment covering 290 to 300 (VPGTSETNPTV) has biased composition (polar residues).

This Mus musculus (Mouse) protein is CUE domain-containing protein 1 (Cuedc1).